The chain runs to 201 residues: Large ribosomal subunit protein eL15B (201 aa).

The segment at 161-182 (SRGLTSIGKKSRGIGKGHRYNN) is disordered. The span at 169 to 179 (KKSRGIGKGHR) shows a compositional bias: basic residues. Ser183 is subject to Phosphoserine.

Belongs to the eukaryotic ribosomal protein eL15 family. Component of the large ribosomal subunit (LSU). Mature yeast ribosomes consist of a small (40S) and a large (60S) subunit. The 40S small subunit contains 1 molecule of ribosomal RNA (18S rRNA) and at least 33 different proteins. The large 60S subunit contains 3 rRNA molecules (25S, 5.8S and 5S rRNA) and at least 46 different proteins.

It is found in the cytoplasm. The protein resides in the nucleus. Its subcellular location is the nucleolus. Its function is as follows. Component of the ribosome, a large ribonucleoprotein complex responsible for the synthesis of proteins in the cell. The small ribosomal subunit (SSU) binds messenger RNAs (mRNAs) and translates the encoded message by selecting cognate aminoacyl-transfer RNA (tRNA) molecules. The large subunit (LSU) contains the ribosomal catalytic site termed the peptidyl transferase center (PTC), which catalyzes the formation of peptide bonds, thereby polymerizing the amino acids delivered by tRNAs into a polypeptide chain. The nascent polypeptides leave the ribosome through a tunnel in the LSU and interact with protein factors that function in enzymatic processing, targeting, and the membrane insertion of nascent chains at the exit of the ribosomal tunnel. The sequence is that of Large ribosomal subunit protein eL15B (rpl1502) from Schizosaccharomyces pombe (strain 972 / ATCC 24843) (Fission yeast).